The following is a 564-amino-acid chain: Protein NRT1/ PTR FAMILY 5.16 (564 aa).

2 helical membrane-spanning segments follow: residues 49–69 and 80–100; these read FAYFGIGSNLITYLTGPLGQS and WSGTASILPVLGAFIADAYLG. Thr-104 is modified (phosphothreonine). Transmembrane regions (helical) follow at residues 110–130, 145–165, 192–212, 220–240, 327–347, 358–378, 408–428, 450–470, 486–506, and 533–553; these read LIYILGLGLLTLSSILILMGL, FFWVNILFFCSLYLVAIGQGG, FFNWWFLSLSAGITLSIIVVV, WALGFGIPCLFMVMALALFLF, IPIWITSVVSTIPYAQYATFF, ILPGFEIPPASFQALIGLSIF, IGAGMVLSSLNMVVAALVEMK, IWWFVPQYLLLGMIDVFSLVG, IGLALSLSAMGLASFLSGFLI, and YFYWLLAAFTAIGFLAFLLLS.

This sequence belongs to the major facilitator superfamily. Proton-dependent oligopeptide transporter (POT/PTR) (TC 2.A.17) family. In terms of tissue distribution, expressed in shoots and roots.

It is found in the membrane. The sequence is that of Protein NRT1/ PTR FAMILY 5.16 (NPF5.16) from Arabidopsis thaliana (Mouse-ear cress).